The chain runs to 271 residues: MTFIEKLSAVWQSQKTQLCIGLDPDLAKFPAHLKGKPDAILTFCKEIIDATADTACAFKPQIAYFAALRAEDQLEAICSYLRERYPHIPIVLDAKRGDIGATAEQYAREAFERYGADAVTVNPYMGFDSVQPYLERPDRGVIVLCRTSNAGGSDLQFLNVDGKPLYQHVAQLVADKWNTNGQCALVVGATFPNELAQVRALVGDMPLLIPGIGAQGGDIKATVEAGRTANGTGMMINSSRAILYAKADETFAQAARQVALETRDAINRYIA.

K95 serves as the catalytic Proton donor.

Belongs to the OMP decarboxylase family. Type 2 subfamily.

The catalysed reaction is orotidine 5'-phosphate + H(+) = UMP + CO2. The protein operates within pyrimidine metabolism; UMP biosynthesis via de novo pathway; UMP from orotate: step 2/2. In Janthinobacterium sp. (strain Marseille) (Minibacterium massiliensis), this protein is Orotidine 5'-phosphate decarboxylase.